A 168-amino-acid chain; its full sequence is G/U mismatch-specific DNA glycosylase (168 aa).

This sequence belongs to the uracil-DNA glycosylase (UDG) superfamily. TDG/mug family. As to quaternary structure, binds DNA as a monomer.

The protein localises to the cytoplasm. The catalysed reaction is Specifically hydrolyzes mismatched double-stranded DNA and polynucleotides, releasing free uracil.. In terms of biological role, excises ethenocytosine and uracil, which can arise by alkylation or deamination of cytosine, respectively, from the corresponding mispairs with guanine in ds-DNA. It is capable of hydrolyzing the carbon-nitrogen bond between the sugar-phosphate backbone of the DNA and the mispaired base. The complementary strand guanine functions in substrate recognition. Required for DNA damage lesion repair in stationary-phase cells. The chain is G/U mismatch-specific DNA glycosylase from Enterobacter sp. (strain 638).